The sequence spans 103 residues: Histone H4 (103 aa).

Positions 1-32 (MNTQSIGAKGKSKAAKGIAKRHRKQSSLSDSI) are disordered. Residues 10-25 (GKSKAAKGIAKRHRKQ) show a composition bias toward basic residues. Lysine 16 is modified (N6-acetyl-N6-methyllysine; alternate). Residue lysine 16 is modified to N6-methyllysine; alternate. The DNA-binding element occupies 20–24 (KRHRK). Lysine 94 carries the N6-glutaryllysine modification.

The protein belongs to the histone H4 family. In terms of assembly, the nucleosome is a histone octamer containing two molecules each of H2A, H2B, H3 and H4 assembled in one H3-H4 heterotetramer and two H2A-H2B heterodimers. The octamer wraps approximately 147 bp of DNA. In terms of processing, glutarylation at Lys-94 (H4K91glu) destabilizes nucleosomes by promoting dissociation of the H2A-H2B dimers from nucleosomes.

Its subcellular location is the nucleus. It localises to the chromosome. Core component of nucleosome. Nucleosomes wrap and compact DNA into chromatin, limiting DNA accessibility to the cellular machineries which require DNA as a template. Histones thereby play a central role in transcription regulation, DNA repair, DNA replication and chromosomal stability. DNA accessibility is regulated via a complex set of post-translational modifications of histones, also called histone code, and nucleosome remodeling. The chain is Histone H4 (HHF1) from Encephalitozoon cuniculi (strain GB-M1) (Microsporidian parasite).